Consider the following 152-residue polypeptide: MLSIAIGADSAAIDLKNTITDYLQQKGLTVTDYSYDPTGENPIYPDVAYTLAHAIKDGKHQRGILLCGTGIGMCIVANKVNGIRAAQCHDTYSAQRARKSNNAQVIALGARVIGPELAKEIIGAWLDAEFEGGGSAPKVEKIGYYEHQEKHQ.

C67 acts as the Proton acceptor in catalysis.

This sequence belongs to the LacAB/RpiB family.

It catalyses the reaction D-erythrulose 4-phosphate = D-erythrose 4-phosphate. Its pathway is carbohydrate metabolism. Functionally, involved in catabolism of D-apiose. Catalyzes the isomerization of D-erythrulose 4-phosphate to D-erythrose 4-phosphate. The protein is D-erythrulose-4-phosphate isomerase of Pectobacterium atrosepticum (strain SCRI 1043 / ATCC BAA-672) (Erwinia carotovora subsp. atroseptica).